Reading from the N-terminus, the 152-residue chain is Dimethylsulfoniopropionate lyase DddW (152 aa).

Residues 69–124 (IAEFGPGHQLRPHRHTPPEFYLGLEGSGIVTIDGVPHEIRAGVALYIPGDAEHGTV) enclose the Cupin type-2 domain. Positions 83, 87, 89, and 121 each coordinate Fe cation.

The protein belongs to the non-heme iron-dependent dioxygenase family. In terms of assembly, homodimer. Fe(2+) serves as cofactor.

The enzyme catalyses S,S-dimethyl-beta-propiothetin = acrylate + dimethyl sulfide + H(+). Functionally, able to cleave dimethylsulfoniopropionate (DMSP), releasing dimethyl sulfide (DMS) and acrylate. DMS is the principal form by which sulfur is transported from oceans to the atmosphere. This is Dimethylsulfoniopropionate lyase DddW from Ruegeria pomeroyi (strain ATCC 700808 / DSM 15171 / DSS-3) (Silicibacter pomeroyi).